Here is a 213-residue protein sequence, read N- to C-terminus: Endoplasmic reticulum vesicle protein 25 (213 aa).

An N-terminal signal peptide occupies residues 1 to 20 (MILRIPSLLYLFTLLTAVYA). Residues 21–181 (VKFDLTSDRN…TNESTNQRVK (161 aa)) are Lumenal-facing. The region spanning 33 to 122 (PKCIWNFASA…VRSVELDVDI (90 aa)) is the GOLD domain. The chain crosses the membrane as a helical span at residues 182–202 (VFSVLIICCTIGLGVWQLLHL). Over 203–213 (RSFFKRKYLID) the chain is Cytoplasmic.

This sequence belongs to the EMP24/GP25L family.

Its subcellular location is the endoplasmic reticulum membrane. The protein resides in the golgi apparatus membrane. Constituent of COPII-coated endoplasmic reticulum-derived transport vesicles. Required for efficient transport of a subset of secretory proteins to the Golgi. Facilitates retrograde transport from the Golgi to the endoplasmic reticulum. The sequence is that of Endoplasmic reticulum vesicle protein 25 (ERV25) from Cryptococcus neoformans var. neoformans serotype D (strain JEC21 / ATCC MYA-565) (Filobasidiella neoformans).